Consider the following 444-residue polypeptide: Multidrug resistance protein MdtA (444 aa).

An N-terminal signal peptide occupies residues 1 to 20; sequence MKSQSKRTSRLFVFVGVVVA. The segment covering 37–52 has biased composition (polar residues); the sequence is NNTSGAQQSARGQDTS. 2 disordered regions span residues 37–60 and 398–444; these read NNTS…RNTP and TPRS…AEKS. Residues 409–419 are compositionally biased toward low complexity; that stretch reads ASAEKAAAEAE. Polar residues predominate over residues 435–444; sequence ARSTTAAEKS.

This sequence belongs to the membrane fusion protein (MFP) (TC 8.A.1) family. In terms of assembly, part of a tripartite efflux system composed of MdtA, MdtB and MdtC.

It localises to the cell inner membrane. The sequence is that of Multidrug resistance protein MdtA from Yersinia pseudotuberculosis serotype O:3 (strain YPIII).